A 149-amino-acid polypeptide reads, in one-letter code: Probable conjugal transfer protein TrbE part 1 (149 aa).

This sequence belongs to the TrbE/VirB4 family.

The protein is Probable conjugal transfer protein TrbE part 1 (trbEA) of Sinorhizobium fredii (strain NBRC 101917 / NGR234).